The sequence spans 155 residues: Histone H2B.4 (155 aa).

The segment covering 1-28 (MAPKTKEEKPASEAVEPKAEAKPKAEKA) has biased composition (basic and acidic residues). Residues 1–62 (MAPKTKEEKP…GDKKKKKAKV (62 aa)) form a disordered region. The segment covering 29-40 (PKKKEKKAPAKK) has biased composition (basic residues). A Glycyl lysine isopeptide (Lys-Gly) (interchain with G-Cter in ubiquitin) cross-link involves residue lysine 151.

It belongs to the histone H2B family. The nucleosome is a histone octamer containing two molecules each of H2A, H2B, H3 and H4 assembled in one H3-H4 heterotetramer and two H2A-H2B heterodimers. The octamer wraps approximately 147 bp of DNA. In terms of processing, monoubiquitinated to form H2BK143ub1; may give a specific tag for epigenetic transcriptional activation.

Its subcellular location is the nucleus. It is found in the chromosome. Functionally, core component of nucleosome. Nucleosomes wrap and compact DNA into chromatin, limiting DNA accessibility to the cellular machineries which require DNA as a template. Histones thereby play a central role in transcription regulation, DNA repair, DNA replication and chromosomal stability. DNA accessibility is regulated via a complex set of post-translational modifications of histones, also called histone code, and nucleosome remodeling. The protein is Histone H2B.4 of Volvox carteri (Green alga).